A 383-amino-acid polypeptide reads, in one-letter code: Acetylornithine deacetylase (383 aa).

His80 provides a ligand contact to Zn(2+). Asp82 is a catalytic residue. Asp112 lines the Zn(2+) pocket. Residue Glu144 is part of the active site. Zn(2+) is bound by residues Glu145, Glu169, and His355.

The protein belongs to the peptidase M20A family. ArgE subfamily. In terms of assembly, homodimer. Zn(2+) serves as cofactor. Co(2+) is required as a cofactor. It depends on glutathione as a cofactor.

The protein resides in the cytoplasm. The catalysed reaction is N(2)-acetyl-L-ornithine + H2O = L-ornithine + acetate. It participates in amino-acid biosynthesis; L-arginine biosynthesis; L-ornithine from N(2)-acetyl-L-ornithine (linear): step 1/1. In terms of biological role, catalyzes the hydrolysis of the amide bond of N(2)-acetylated L-amino acids. Cleaves the acetyl group from N-acetyl-L-ornithine to form L-ornithine, an intermediate in L-arginine biosynthesis pathway, and a branchpoint in the synthesis of polyamines. This is Acetylornithine deacetylase from Escherichia coli O157:H7.